A 107-amino-acid polypeptide reads, in one-letter code: Early E3A 12.5 kDa protein (107 aa).

This sequence belongs to the adenoviridae E3A-2 family.

Not yet known. This Human adenovirus C serotype 5 (HAdV-5) protein is Early E3A 12.5 kDa protein.